A 227-amino-acid polypeptide reads, in one-letter code: UPF0758 protein CPF_2399 (227 aa).

Residues 105–227 (KISKPSDVAK…FISLKEKDIL (123 aa)) form the MPN domain. The Zn(2+) site is built by H176, H178, and D189. The short motif at 176-189 (HNHPSGDPTPSRDD) is the JAMM motif element.

Belongs to the UPF0758 family.

In Clostridium perfringens (strain ATCC 13124 / DSM 756 / JCM 1290 / NCIMB 6125 / NCTC 8237 / Type A), this protein is UPF0758 protein CPF_2399.